Reading from the N-terminus, the 123-residue chain is Defensin beta 118 (123 aa).

An N-terminal signal peptide occupies residues 1–19 (MKLLLLALPMLVLLPQVIP). 3 cysteine pairs are disulfide-bonded: C27–C54, C34–C48, and C38–C55. Residues 65-123 (VPTTSPTPLSDSTPGIIDDILTVRFTTDYFEVSSKKDMIEESEAGRGTETSLPNVHHSS) constitute a propeptide that is removed on maturation. Residues 100–110 (KDMIEESEAGR) are compositionally biased toward basic and acidic residues. The interval 100-123 (KDMIEESEAGRGTETSLPNVHHSS) is disordered. Residues 112 to 123 (TETSLPNVHHSS) are compositionally biased toward polar residues.

This sequence belongs to the beta-defensin family. In terms of processing, the three-dimensional structure formed by the three intramolecular disulfide bridges is indispensable for antimicrobial activity.

Its subcellular location is the secreted. In terms of biological role, host defense peptide that exhibits antimicrobial activity against both Gram-negative bacteria, such as E.coli and S.typhimurium, and Gram-positive bacteria, such as S.aureus and B.subtilis. Inhibits cell adhesion of E.coli on intestinal epithelial enterocytes. Causes rapid permeabilization of both the outer and inner membrane of E.coli, leading to morphological alterations on the bacterial surface. Binds to bacterial lipopolysaccharides (LPS) with high affinity, and may thereby be involved in immunoregulation through LPS neutralization. May contribute to epididymal innate immunity and protect the sperm against attack by microorganisms. The sequence is that of Defensin beta 118 (DEFB118) from Gorilla gorilla gorilla (Western lowland gorilla).